The chain runs to 696 residues: Serotransferrin (696 aa).

Transferrin-like domains lie at 6-332 (VRWC…NLRE) and 346-672 (VRWC…NLRK). 2 cysteine pairs are disulfide-bonded: cysteine 9/cysteine 47 and cysteine 19/cysteine 38. The residue at position 23 (arginine 23) is a Dimethylated arginine. An N-linked (GlcNAc...) asparagine glycan is attached at asparagine 25. Residues aspartate 62 and tyrosine 94 each contribute to the Fe(3+) site. 5 cysteine pairs are disulfide-bonded: cysteine 117-cysteine 198, cysteine 157-cysteine 173, cysteine 160-cysteine 181, cysteine 170-cysteine 183, and cysteine 231-cysteine 245. Hydrogencarbonate-binding residues include threonine 119, arginine 123, alanine 125, and glycine 126. Tyrosine 192 contributes to the Fe(3+) binding site. Histidine 253 serves as a coordination point for Fe(3+). Disulfide bonds link cysteine 343–cysteine 605, cysteine 349–cysteine 381, cysteine 359–cysteine 372, cysteine 406–cysteine 682, cysteine 423–cysteine 646, cysteine 456–cysteine 532, cysteine 480–cysteine 673, cysteine 490–cysteine 504, cysteine 501–cysteine 515, cysteine 572–cysteine 586, and cysteine 624–cysteine 629. Residue serine 374 is modified to Phosphoserine. 2 residues coordinate Fe(3+): aspartate 396 and tyrosine 431. Hydrogencarbonate-binding residues include threonine 458, arginine 462, alanine 464, and glycine 465. Asparagine 497 is a glycosylation site (N-linked (GlcNAc...) asparagine). Tyrosine 526 is a Fe(3+) binding site. Histidine 594 contacts Fe(3+). Residue serine 674 is modified to Phosphoserine.

It belongs to the transferrin family. Monomer. Part of a complex composed of SLC40A1/ferroportin, TF/transferrin and HEPH/hephaestin that transfers iron from cells to transferrin. In terms of tissue distribution, expressed by the liver and secreted in plasma.

The protein resides in the secreted. Its function is as follows. Transferrins are iron binding transport proteins which can bind two Fe(3+) ions in association with the binding of an anion, usually bicarbonate. It is responsible for the transport of iron from sites of absorption and heme degradation to those of storage and utilization. Serum transferrin may also have a further role in stimulating cell proliferation. The chain is Serotransferrin (TF) from Sus scrofa (Pig).